The primary structure comprises 250 residues: Probable ABC transporter permease protein BAB2_1148 (250 aa).

Helical transmembrane passes span Leu12–Val32, Val63–Trp83, Trp94–Leu114, Ile122–Ile142, Val172–Ala192, and Leu211–Phe231. The ABC transmembrane type-1 domain occupies Ile56 to Leu236.

This sequence belongs to the binding-protein-dependent transport system permease family. As to quaternary structure, the complex is composed of two ATP-binding proteins (BAB2_1147), two transmembrane proteins (BAB2_1148) and a solute-binding protein (BAB2_1146).

It is found in the cell inner membrane. Probably part of an ABC transporter complex. Probably responsible for the translocation of the substrate across the membrane. The chain is Probable ABC transporter permease protein BAB2_1148 from Brucella abortus (strain 2308).